We begin with the raw amino-acid sequence, 178 residues long: Large ribosomal subunit protein uL6 (178 aa).

It belongs to the universal ribosomal protein uL6 family. Part of the 50S ribosomal subunit.

Its function is as follows. This protein binds to the 23S rRNA, and is important in its secondary structure. It is located near the subunit interface in the base of the L7/L12 stalk, and near the tRNA binding site of the peptidyltransferase center. The chain is Large ribosomal subunit protein uL6 from Francisella tularensis subsp. novicida (strain U112).